The sequence spans 328 residues: Purple acid phosphatase 7 (328 aa).

A signal peptide spans 1–24 (MKMHVCFSVILMFLSIFFINGALS). A Fe cation-binding site is contributed by aspartate 48. The N-linked (GlcNAc...) asparagine glycan is linked to asparagine 56. Fe cation is bound by residues aspartate 81 and tyrosine 84. Residue aspartate 81 coordinates Zn(2+). Residues asparagine 119 and histidine 213 each coordinate Zn(2+). The active-site Proton donor is histidine 222. Histidine 248 contacts Zn(2+). Position 248–250 (248–250 (HDH)) interacts with substrate. Histidine 250 contacts Fe cation.

The protein belongs to the metallophosphoesterase superfamily. Purple acid phosphatase family. Homodimer. Requires Fe cation as cofactor. Zn(2+) serves as cofactor. As to expression, expressed in roots, stems, leaves, flowers and siliques.

The protein resides in the secreted. It catalyses the reaction a phosphate monoester + H2O = an alcohol + phosphate. The sequence is that of Purple acid phosphatase 7 (PAP7) from Arabidopsis thaliana (Mouse-ear cress).